Consider the following 930-residue polypeptide: MNKIRKFFRGSGRVLAFIFVASVIWLLFDMAALRLSFSEINTGILKEDIMRREQTGFRVEADQMTILSPSSRGMRPPRNGAGGKESFRKAENRVLKVEENVDQVQRKGKMQFLLGRGKAVSLWHRTHVQTLPVTLPMQKTQGRDSKPEVSSLHMMSKQTTVLGSEKDSFTVSRGVPLNKTAEHTETLDKKQEAPENYNLSSDTSKQASQRALNVTISVRTDRSKQQSQTVTKSSIQFASLPILKPEEVTVTKKTEAQGKDLKYEAHKARPLLKFTADVGHLKKQSTNETGLGVLPEADGAKVAPGKKLNFSESQIVIITKEEGQKTDTKEVPNSKIQTVFPKLLGESQGKHIPRSQSQTLSSPLAPKRAVSQSKPTLAEELHTARSNLTAKATTVGHQQSHANISENPGKHHVLRIDVTLSPRDLNAPGQFGRPVVVPPGKKKEAEQRWKEGNFNVYLSDLIPVDRAIEDTRPAGCAEQLVHNDLPTTSIIMCFVDEVWSALLRSVHSVLNRSPPHLIKEILLVDDFSTKDYLKANLDKYMSQFPKVRILRLKERHGLIRARLAGAQNATGDVLTFLDSHVECNVGWLEPLLERVYLNRKKVACPVIEVINDKDMSYMTVDNFQRGVFTWPMNFGWRTIPPDVIAKNGIKETDIIRCPVMAGGLFSIDKSYFYELGTYDPGLDVWGGENMELSFKVWMCGGEIEIIPCSRVGHIFRNDNPYSFPKDRMKTVERNLVRVAEVWLDEYKELFYGHGDHLIDQGLDVGNLTQQRELRKKLKCQSFKWYLDNVFPDLKAPVVRASGVFINLALGKCVSIKNITVVLEDCDGSSELQQFNYTWVRLIKHGEWCVAPIPDKGSLTLYPCDNRNNRLKWLHRSASAFHPELVDHIVFESYQQLLCMEGNFSQKTLKLAACNPTEPQQKWKFEKYYDV.

Residues 1-12 (MNKIRKFFRGSG) lie on the Cytoplasmic side of the membrane. The helical; Signal-anchor for type II membrane protein transmembrane segment at 13-35 (RVLAFIFVASVIWLLFDMAALRL) threads the bilayer. Residues 36 to 930 (SFSEINTGIL…KWKFEKYYDV (895 aa)) lie on the Lumenal side of the membrane. A disordered region spans residues 163–210 (GSEKDSFTVSRGVPLNKTAEHTETLDKKQEAPENYNLSSDTSKQASQR). N178 carries an N-linked (GlcNAc...) asparagine glycan. Residues 180-193 (TAEHTETLDKKQEA) are compositionally biased toward basic and acidic residues. The segment covering 197–210 (YNLSSDTSKQASQR) has biased composition (polar residues). N198 and N213 each carry an N-linked (GlcNAc...) asparagine glycan. The residue at position 285 (S285) is a Phosphoserine. N-linked (GlcNAc...) asparagine glycosylation is found at N287 and N309. The segment at 344 to 377 (LGESQGKHIPRSQSQTLSSPLAPKRAVSQSKPTL) is disordered. 2 N-linked (GlcNAc...) asparagine glycosylation sites follow: N387 and N403. Disulfide bonds link C476/C708, C699/C779, and C812/C825. Residues 485 to 594 (LPTTSIIMCF…VGWLEPLLER (110 aa)) form a catalytic subdomain A region. Residues D526 and R555 each contribute to the substrate site. A glycan (N-linked (GlcNAc...) asparagine) is linked at N568. A Mn(2+)-binding site is contributed by D578. A substrate-binding site is contributed by S579. Residue H580 participates in Mn(2+) binding. The interval 654-716 (IIRCPVMAGG…PCSRVGHIFR (63 aa)) is catalytic subdomain B. A substrate-binding site is contributed by W685. H713 contacts Mn(2+). R716 and Y721 together coordinate substrate. 3 N-linked (GlcNAc...) asparagine glycosylation sites follow: N766, N817, and N835. The region spanning 794–925 (KAPVVRASGV…TEPQQKWKFE (132 aa)) is the Ricin B-type lectin domain. 2 disulfide bridges follow: C848/C863 and C898/C913. N902 carries N-linked (GlcNAc...) asparagine glycosylation.

This sequence belongs to the glycosyltransferase 2 family. GalNAc-T subfamily. In terms of assembly, interacts with EXT2. Does not interact with EXT1, EXTL1 or EXTL3. Mn(2+) serves as cofactor. In terms of tissue distribution, predominantly expressed in sublingual gland. Expressed at lower level in stomach and small intestine. Weakly or not expressed in submandibular gland, parotid gland, kidney, liver, heart, brain, spleen, lung, skeletal muscle, testis, ovary, cervix and uterus.

The protein resides in the golgi apparatus membrane. It carries out the reaction L-seryl-[protein] + UDP-N-acetyl-alpha-D-galactosamine = a 3-O-[N-acetyl-alpha-D-galactosaminyl]-L-seryl-[protein] + UDP + H(+). It catalyses the reaction L-threonyl-[protein] + UDP-N-acetyl-alpha-D-galactosamine = a 3-O-[N-acetyl-alpha-D-galactosaminyl]-L-threonyl-[protein] + UDP + H(+). It functions in the pathway protein modification; protein glycosylation. Functionally, catalyzes the initial reaction in O-linked oligosaccharide biosynthesis, the transfer of an N-acetyl-D-galactosamine residue to a serine or threonine residue on the protein receptor. Has activity toward EA2 peptide substrate, but has a weak activity toward Muc2, Muc1b, rMuc-2 or mG-Muc substrates. In Rattus norvegicus (Rat), this protein is Polypeptide N-acetylgalactosaminyltransferase 5 (Galnt5).